We begin with the raw amino-acid sequence, 150 residues long: D-aminoacyl-tRNA deacylase (150 aa).

The short motif at 136–137 (GP) is the Gly-cisPro motif, important for rejection of L-amino acids element.

The protein belongs to the DTD family. Homodimer.

The protein resides in the cytoplasm. It carries out the reaction glycyl-tRNA(Ala) + H2O = tRNA(Ala) + glycine + H(+). It catalyses the reaction a D-aminoacyl-tRNA + H2O = a tRNA + a D-alpha-amino acid + H(+). Functionally, an aminoacyl-tRNA editing enzyme that deacylates mischarged D-aminoacyl-tRNAs. Also deacylates mischarged glycyl-tRNA(Ala), protecting cells against glycine mischarging by AlaRS. Acts via tRNA-based rather than protein-based catalysis; rejects L-amino acids rather than detecting D-amino acids in the active site. By recycling D-aminoacyl-tRNA to D-amino acids and free tRNA molecules, this enzyme counteracts the toxicity associated with the formation of D-aminoacyl-tRNA entities in vivo and helps enforce protein L-homochirality. In Staphylococcus saprophyticus subsp. saprophyticus (strain ATCC 15305 / DSM 20229 / NCIMB 8711 / NCTC 7292 / S-41), this protein is D-aminoacyl-tRNA deacylase.